The chain runs to 267 residues: Regulatory protein RecX (267 aa).

This sequence belongs to the RecX family.

The protein localises to the cytoplasm. Functionally, modulates RecA activity. The chain is Regulatory protein RecX from Leuconostoc mesenteroides subsp. mesenteroides (strain ATCC 8293 / DSM 20343 / BCRC 11652 / CCM 1803 / JCM 6124 / NCDO 523 / NBRC 100496 / NCIMB 8023 / NCTC 12954 / NRRL B-1118 / 37Y).